The chain runs to 741 residues: Catalase-peroxidase (741 aa).

The signal sequence occupies residues 1-23 (MLKKIVTALGMSGMLLASSNAIA). Residues 102–223 (WHDAGTYRIY…YAATQMGLIY (122 aa)) constitute a cross-link (tryptophyl-tyrosyl-methioninium (Trp-Tyr) (with M-249)). His103 functions as the Proton acceptor in the catalytic mechanism. The tryptophyl-tyrosyl-methioninium (Tyr-Met) (with W-102) cross-link spans 223-249 (YVNPEGPDGKPDIKGAASEIRQAFRAM). His264 serves as a coordination point for heme b.

Belongs to the peroxidase family. Peroxidase/catalase subfamily. In terms of assembly, homodimer or homotetramer. It depends on heme b as a cofactor. Formation of the three residue Trp-Tyr-Met cross-link is important for the catalase, but not the peroxidase activity of the enzyme.

It catalyses the reaction H2O2 + AH2 = A + 2 H2O. The catalysed reaction is 2 H2O2 = O2 + 2 H2O. Bifunctional enzyme with both catalase and broad-spectrum peroxidase activity. This chain is Catalase-peroxidase, found in Francisella tularensis subsp. tularensis (strain WY96-3418).